A 181-amino-acid polypeptide reads, in one-letter code: Interleukin-24 (181 aa).

The first 26 residues, 1–26, serve as a signal peptide directing secretion; the sequence is MSWGLQILPCLSLILLLWNQVPGLEG. An intrachain disulfide couples C34 to C81. N74 carries an N-linked (GlcNAc...) asparagine glycan. K97 is covalently cross-linked (Glycyl lysine isopeptide (Lys-Gly) (interchain with G-Cter in ubiquitin)).

This sequence belongs to the IL-10 family. In terms of processing, glycosylated. Ubiquitination at Lys-97 promotes proteasomal degradation. Selectively expressed by Th2 cells. Expressed in the liver.

The protein localises to the secreted. In terms of biological role, multifunctional cytokine mainly produced by T-cells that plays a regulatory role in immune response, tissue homeostasis, host defense, and oncogenesis. Possesses antiviral functions and induces the type I interferon response during influenza infection. Signals through two receptor complexes IL20RA/IL20RB or IL20RB/IL22RA1. In turn, stimulates the JAK1-STAT3 and MAPK pathways and promotes the secretion of pro-inflammatory mediators including IL8 and MMP1. Intracellularly, maintains endoplasmic reticulum homeostasis by restricting the eIF2alpha-CHOP pathway-mediated stress signal. In addition, acts as a quality control mechanism for the ubiquitin proteasome system by alerting the cell to proteasome dysfunction through activation of PKR/EIF2AK2. In Mus musculus (Mouse), this protein is Interleukin-24 (Il24).